A 247-amino-acid polypeptide reads, in one-letter code: Probable transcriptional regulatory protein lpl1249 (247 aa).

Belongs to the TACO1 family.

The protein resides in the cytoplasm. This chain is Probable transcriptional regulatory protein lpl1249, found in Legionella pneumophila (strain Lens).